The chain runs to 182 residues: ATP synthase subunit delta (182 aa).

This sequence belongs to the ATPase delta chain family. As to quaternary structure, F-type ATPases have 2 components, F(1) - the catalytic core - and F(0) - the membrane proton channel. F(1) has five subunits: alpha(3), beta(3), gamma(1), delta(1), epsilon(1). CF(0) has four main subunits: a(1), b(1), b'(1) and c(10-14). The alpha and beta chains form an alternating ring which encloses part of the gamma chain. F(1) is attached to F(0) by a central stalk formed by the gamma and epsilon chains, while a peripheral stalk is formed by the delta, b and b' chains.

Its subcellular location is the cellular thylakoid membrane. F(1)F(0) ATP synthase produces ATP from ADP in the presence of a proton or sodium gradient. F-type ATPases consist of two structural domains, F(1) containing the extramembraneous catalytic core and F(0) containing the membrane proton channel, linked together by a central stalk and a peripheral stalk. During catalysis, ATP synthesis in the catalytic domain of F(1) is coupled via a rotary mechanism of the central stalk subunits to proton translocation. In terms of biological role, this protein is part of the stalk that links CF(0) to CF(1). It either transmits conformational changes from CF(0) to CF(1) or is implicated in proton conduction. The sequence is that of ATP synthase subunit delta from Synechococcus sp. (strain CC9311).